A 385-amino-acid chain; its full sequence is Gibberellin 20 oxidase 5 (385 aa).

In terms of domain architecture, Fe2OG dioxygenase spans 224-324 (DGSGIFRCNY…RRSLVFFSCP (101 aa)). Fe cation contacts are provided by His249, Asp251, and His305. Arg315 is a catalytic residue.

Belongs to the iron/ascorbate-dependent oxidoreductase family. GA20OX subfamily. Fe(2+) is required as a cofactor. L-ascorbate serves as cofactor. Expressed in 3-day-old seedlings and siliques. Detected in dry seeds, roots, old leaves and inflorescences.

The catalysed reaction is gibberellin A12 + 2 2-oxoglutarate + 3 O2 + H(+) = gibberellin A9 + 2 succinate + 3 CO2 + 2 H2O. It carries out the reaction gibberellin A53 + 2 2-oxoglutarate + 3 O2 + H(+) = gibberellin A20 + 2 succinate + 3 CO2 + 2 H2O. It functions in the pathway plant hormone biosynthesis; gibberellin biosynthesis. In terms of biological role, key oxidase enzyme in the biosynthesis of gibberellin that catalyzes the conversion of GA12 and GA53 to GA9 and GA20 respectively, via a three-step oxidation at C-20 of the GA skeleton. In Arabidopsis thaliana (Mouse-ear cress), this protein is Gibberellin 20 oxidase 5 (GA20OX5).